A 93-amino-acid polypeptide reads, in one-letter code: Non-histone chromosomal protein 6A (93 aa).

Disordered regions lie at residues 1–23 and 69–93; these read MVTP…APKR and PYEA…ATLA. Basic residues predominate over residues 7–16; sequence PKKRTTRKKK. A DNA-binding region (HMG box) is located at residues 21 to 89; it reads PKRALSAYMF…RYESEKELYN (69 aa). Residues 69 to 87 are compositionally biased toward basic and acidic residues; it reads PYEAKAQADKKRYESEKEL.

It belongs to the NHP6 family. Weakly associates with the stable SPT16-POB3 heterodimer to form the FACT (yFACT or SNP) complex, which is associated with nucleosomes. Multiple molecules of NHP6 (NHP6A and/or NHP6B) are required to recruit the SPT16-POB3 heterodimer to DNA.

The protein resides in the nucleus. It localises to the chromosome. In terms of biological role, DNA-binding protein that induces severe bending of DNA. Required for DNA-binding by the FACT complex, a general chromatin factor that acts to reorganize nucleosomes. The FACT complex is involved in multiple processes that require DNA as a template such as mRNA elongation, DNA replication and DNA repair. Also augments the fidelity of transcription by RNA polymerase III independently of any role in the FACT complex. Required for transcriptional initiation fidelity of some but not all tRNA genes. Seems to be functionally redundant with NHP6B. The protein is Non-histone chromosomal protein 6A (NHP6A) of Saccharomyces cerevisiae (strain ATCC 204508 / S288c) (Baker's yeast).